We begin with the raw amino-acid sequence, 497 residues long: Mechanosensitive ion channel protein 1, mitochondrial (497 aa).

A mitochondrion-targeting transit peptide spans 1–86 (MAGVRLSLLK…RAFSSKSDDF (86 aa)). Transmembrane regions (helical) follow at residues 152–172 (DVIVPVSLTMTGTLFAWVVMP), 216–236 (LVTFIAFAQIAAMVAPTTIAA), 238–258 (YFSPTVKGAVILSLVWFLYRW), 280–300 (VLTLDKVSSVGLFAIGLMASA), and 305–325 (VAVQSILTVGGVGGVATAFAA).

Belongs to the MscS (TC 1.A.23) family.

It is found in the mitochondrion membrane. Mechanosensitive channel that opens in response to stretch forces in the membrane lipid bilayer. This is Mechanosensitive ion channel protein 1, mitochondrial (MSL1) from Arabidopsis thaliana (Mouse-ear cress).